Reading from the N-terminus, the 198-residue chain is Protein GrpE (198 aa).

Residues methionine 1–glutamate 21 show a composition bias toward basic and acidic residues. The interval methionine 1 to asparagine 56 is disordered. Low complexity predominate over residues glycine 22–alanine 34. Basic and acidic residues predominate over residues glycine 44 to asparagine 56.

Belongs to the GrpE family. Homodimer.

Its subcellular location is the cytoplasm. Participates actively in the response to hyperosmotic and heat shock by preventing the aggregation of stress-denatured proteins, in association with DnaK and GrpE. It is the nucleotide exchange factor for DnaK and may function as a thermosensor. Unfolded proteins bind initially to DnaJ; upon interaction with the DnaJ-bound protein, DnaK hydrolyzes its bound ATP, resulting in the formation of a stable complex. GrpE releases ADP from DnaK; ATP binding to DnaK triggers the release of the substrate protein, thus completing the reaction cycle. Several rounds of ATP-dependent interactions between DnaJ, DnaK and GrpE are required for fully efficient folding. This is Protein GrpE from Chlorobium luteolum (strain DSM 273 / BCRC 81028 / 2530) (Pelodictyon luteolum).